Consider the following 213-residue polypeptide: Thymidylate kinase (213 aa).

An ATP-binding site is contributed by 11–18 (GGEGAGKT).

Belongs to the thymidylate kinase family.

It catalyses the reaction dTMP + ATP = dTDP + ADP. In terms of biological role, phosphorylation of dTMP to form dTDP in both de novo and salvage pathways of dTTP synthesis. This chain is Thymidylate kinase, found in Shouchella clausii (strain KSM-K16) (Alkalihalobacillus clausii).